A 293-amino-acid polypeptide reads, in one-letter code: Elongation factor Ts (293 aa).

The involved in Mg(2+) ion dislocation from EF-Tu stretch occupies residues 80–83; the sequence is TDFV.

Belongs to the EF-Ts family.

It is found in the cytoplasm. Its function is as follows. Associates with the EF-Tu.GDP complex and induces the exchange of GDP to GTP. It remains bound to the aminoacyl-tRNA.EF-Tu.GTP complex up to the GTP hydrolysis stage on the ribosome. This is Elongation factor Ts from Burkholderia cenocepacia (strain ATCC BAA-245 / DSM 16553 / LMG 16656 / NCTC 13227 / J2315 / CF5610) (Burkholderia cepacia (strain J2315)).